We begin with the raw amino-acid sequence, 59 residues long: Large ribosomal subunit protein bL32 (59 aa).

The tract at residues 1–59 (MAVQQNKKSPSKRGMHRSHDALTAPALSVDSTTGEVHRPHHISPNGMYRGRKVVKVKGE) is disordered. The segment covering 49-59 (RGRKVVKVKGE) has biased composition (basic residues).

It belongs to the bacterial ribosomal protein bL32 family.

The chain is Large ribosomal subunit protein bL32 (rpmF) from Neisseria meningitidis serogroup A / serotype 4A (strain DSM 15465 / Z2491).